The primary structure comprises 186 residues: Large ribosomal subunit protein bL12c (186 aa).

Residues 1-11 (MASTLSTITLR) show a composition bias toward polar residues. 2 disordered regions span residues 1–23 (MAST…STHA) and 162–186 (EGVS…VSIA). Residues 1–53 (MASTLSTITLRSPSPSTASSTHASIPFPKKALEFPIRTPKLHHRRATFLRPLA) constitute a chloroplast transit peptide. Over residues 12 to 23 (SPSPSTASSTHA) the composition is skewed to low complexity. Residues 162–180 (EGVSKDEAEDAKKQLEEAG) show a composition bias toward basic and acidic residues.

The protein belongs to the bacterial ribosomal protein bL12 family.

The protein localises to the plastid. The protein resides in the chloroplast. This chain is Large ribosomal subunit protein bL12c (RPL12), found in Nicotiana tabacum (Common tobacco).